The chain runs to 514 residues: Lysine--tRNA ligase (514 aa).

The Mg(2+) site is built by Glu-422 and Glu-429.

Belongs to the class-II aminoacyl-tRNA synthetase family. In terms of assembly, homodimer. Mg(2+) is required as a cofactor.

It localises to the cytoplasm. The enzyme catalyses tRNA(Lys) + L-lysine + ATP = L-lysyl-tRNA(Lys) + AMP + diphosphate. This Psychrobacter arcticus (strain DSM 17307 / VKM B-2377 / 273-4) protein is Lysine--tRNA ligase.